The primary structure comprises 293 residues: MPWIQLKLNTTGANAEDLSDALMEAGAVSITFQDTHDTPVFEPLPGETRLWGDTDVIGLFDAETDMNDVVAILENHPLLGAGFAHKIEQLEDKDWEREWMDNFHPMRFGERLWICPSWRDVPDENAVNVMLDPGLAFGTGTHPTTSLCLQWLDSLDLTGKTVIDFGCGSGILAIAALKLGAAKAIGIDIDPQAIQASRDNAERNGVSDRLELYLPKDQPEEMKADVVVANILAGPLRELAPLISVLPVSGGLLGLSGILASQAESVCEAYADSFALDPVVEKEEWCRITGRKN.

4 residues coordinate S-adenosyl-L-methionine: T145, G166, D188, and N230.

The protein belongs to the methyltransferase superfamily. PrmA family.

The protein resides in the cytoplasm. It carries out the reaction L-lysyl-[protein] + 3 S-adenosyl-L-methionine = N(6),N(6),N(6)-trimethyl-L-lysyl-[protein] + 3 S-adenosyl-L-homocysteine + 3 H(+). Its function is as follows. Methylates ribosomal protein L11. The protein is Ribosomal protein L11 methyltransferase of Escherichia coli O139:H28 (strain E24377A / ETEC).